Here is a 387-residue protein sequence, read N- to C-terminus: [LysW]-aminoadipate semialdehyde/glutamate semialdehyde transaminase (387 aa).

Pyridoxal 5'-phosphate is bound by residues 96–97 (GT) and F123. R126 contacts substrate. Residue 207–210 (DEIQ) participates in pyridoxal 5'-phosphate binding. The residue at position 236 (K236) is an N6-(pyridoxal phosphate)lysine. S264 serves as a coordination point for substrate. T265 contacts pyridoxal 5'-phosphate.

This sequence belongs to the class-III pyridoxal-phosphate-dependent aminotransferase family. LysJ subfamily. Homodimer. It depends on pyridoxal 5'-phosphate as a cofactor.

It localises to the cytoplasm. The enzyme catalyses [amino-group carrier protein]-C-terminal-gamma-(L-lysyl)-L-glutamate + 2-oxoglutarate = [amino-group carrier protein]-C-terminal-N-(1-carboxy-5-oxopentan-1-yl)-L-glutamine + L-glutamate. It carries out the reaction [amino-group carrier protein]-C-terminal-gamma-(L-ornithyl)-L-glutamate + 2-oxoglutarate = [amino-group carrier protein]-C-terminal-gamma-(L-glutamyl-5-semialdehyde)-L-glutamate + L-glutamate. The protein operates within amino-acid biosynthesis; L-lysine biosynthesis via AAA pathway; L-lysine from L-alpha-aminoadipate (Thermus route): step 4/5. It participates in amino-acid biosynthesis; L-arginine biosynthesis. Its function is as follows. Involved in both the arginine and lysine biosynthetic pathways. The polypeptide is [LysW]-aminoadipate semialdehyde/glutamate semialdehyde transaminase (Sulfolobus acidocaldarius (strain ATCC 33909 / DSM 639 / JCM 8929 / NBRC 15157 / NCIMB 11770)).